The sequence spans 283 residues: Ribosomal RNA small subunit methyltransferase I (283 aa).

It belongs to the methyltransferase superfamily. RsmI family.

It is found in the cytoplasm. It catalyses the reaction cytidine(1402) in 16S rRNA + S-adenosyl-L-methionine = 2'-O-methylcytidine(1402) in 16S rRNA + S-adenosyl-L-homocysteine + H(+). In terms of biological role, catalyzes the 2'-O-methylation of the ribose of cytidine 1402 (C1402) in 16S rRNA. In Haemophilus influenzae (strain ATCC 51907 / DSM 11121 / KW20 / Rd), this protein is Ribosomal RNA small subunit methyltransferase I.